We begin with the raw amino-acid sequence, 829 residues long: Spindle-defective protein 2 (829 aa).

4 disordered regions span residues 1-29 (MNED…DGES), 41-104 (EDED…SNDI), 183-294 (KKDV…TTSD), and 326-471 (RKKR…NGHM). Residues 54-82 (FRLENRYKPSLHTPRELPTIREENREDVR) show a composition bias toward basic and acidic residues. Polar residues predominate over residues 83–93 (SNTSSRVNTRP). Positions 183–216 (KKDVTRKQENVRPGKMMPEKVNDENEPKSRRFSP) are enriched in basic and acidic residues. Polar residues-rich tracts occupy residues 217-230 (ERNT…NSTK) and 266-294 (PQRT…TTSD). Positions 314-332 (VDINLLTALENARKKRDRP) form a coiled coil. Composition is skewed to low complexity over residues 361 to 370 (SMTSIVSSST) and 384 to 408 (NSAT…RVST). Polar residues-rich tracts occupy residues 409 to 439 (AKND…NSMT) and 448 to 463 (SVSS…STMT).

It is found in the cytoplasm. The protein resides in the cytoskeleton. Its subcellular location is the microtubule organizing center. The protein localises to the centrosome. It localises to the centriole. Functionally, required both for centrosome duplication and maturation. Required for pericentriolar material (PCM) recruitment. The protein is Spindle-defective protein 2 of Caenorhabditis briggsae.